The sequence spans 572 residues: Probable D-xylulose kinase A (572 aa).

Residues His-95, Arg-166, Asp-282, and Asn-283 each coordinate substrate. ATP is bound by residues Trp-365, 470 to 471 (GG), and Asn-474.

Belongs to the FGGY kinase family.

It is found in the cytoplasm. It carries out the reaction D-xylulose + ATP = D-xylulose 5-phosphate + ADP + H(+). Functionally, highly specific D-xylulose kinase which participates in the catabolism of xylose. Xylose is a major component of hemicelluloses such as xylan. Most fungi utilize D-xylose via three enzymatic reactions, xylose reductase (XR), xylitol dehydrogenase (XDH), and xylulokinase, to form xylulose 5-phosphate, which enters pentose phosphate pathway. This Aspergillus flavus (strain ATCC 200026 / FGSC A1120 / IAM 13836 / NRRL 3357 / JCM 12722 / SRRC 167) protein is Probable D-xylulose kinase A (xkiA).